Consider the following 496-residue polypeptide: RNA-binding motif protein, Y chromosome, family 1 member A1 (496 aa).

In terms of domain architecture, RRM spans 8–85 (GKLFIGGLNR…KAIKVEQAKK (78 aa)). Disordered regions lie at residues 78–349 (IKVE…HRDY) and 452–496 (KDQR…SSRY). 2 stretches are compositionally biased toward low complexity: residues 97–114 (PASS…SARG) and 149–159 (PVKRGPSSRSG). Polar residues predominate over residues 175 to 184 (NSWMGSQGPM). Composition is skewed to basic and acidic residues over residues 204 to 214 (RNDRMSTRHDG), 242 to 253 (DNGHSNRDEHSS), 276 to 289 (AYRD…DESY), 313 to 326 (GYRD…HESY), 335 to 349 (SSRE…HRDY), and 484 to 496 (GESR…SSRY).

As to quaternary structure, interacts with splicing factor proteins SFRS3/SRP20, TRA2B/SFRS10, KHDRBS1/SAM68 and KHDRBS3. As to expression, testis-specific.

The protein localises to the nucleus. Its function is as follows. RNA-binding protein involved in pre-mRNA splicing. Required for sperm development. Acts additively with TRA2B to promote exon 7 inclusion of the survival motor neuron SMN. Binds non-specifically to mRNAs. The protein is RNA-binding motif protein, Y chromosome, family 1 member A1 (RBMY1A1) of Homo sapiens (Human).